Reading from the N-terminus, the 241-residue chain is Antimicrobial ginkbilobin-2-like protein (241 aa).

Residues 1–23 (MLSSKYISVSFLLLSLSLHAVNC) form the signal peptide. 2 consecutive Gnk2-homologous domains span residues 25–127 (DPLY…NIDF) and 133–238 (NKNK…LYPF). 4 disulfides stabilise this stretch: Cys81–Cys90, Cys93–Cys118, Cys192–Cys201, and Cys204–Cys229. N-linked (GlcNAc...) asparagine glycosylation is present at Asn89.

The protein belongs to the cysteine-rich repeat secretory protein family.

It is found in the secreted. Possesses antimicrobial activity toward the oomycete Phytophthora cinnamomi (ink disease agent), thus reducing its growth rate and confering an increased resistance to the plant. The chain is Antimicrobial ginkbilobin-2-like protein from Castanea crenata (Japanese chestnut).